The chain runs to 186 residues: Dynactin subunit 3 (186 aa).

Alanine 2 is modified (N-acetylalanine).

This sequence belongs to the dynactin subunit 3 family. As to quaternary structure, subunit of dynactin, a multiprotein complex part of a tripartite complex with dynein and a adapter, such as BICDL1, BICD2 or HOOK3. The dynactin complex is built around ACTR1A/ACTB filament and consists of an actin-related filament composed of a shoulder domain, a pointed end and a barbed end. Its length is defined by its flexible shoulder domain. The soulder is composed of 2 DCTN1 subunits, 4 DCTN2 and 2 DCTN3. The 4 DCNT2 (via N-terminus) bind the ACTR1A filament and act as molecular rulers to determine the length. The pointed end is important for binding dynein-dynactin cargo adapters. Consists of 4 subunits: ACTR10, DCNT4, DCTN5 and DCTN6. The barbed end is composed of a CAPZA1:CAPZB heterodimers, which binds ACTR1A/ACTB filament and dynactin and stabilizes dynactin.

It is found in the cytoplasm. The protein localises to the cytoskeleton. Its subcellular location is the microtubule organizing center. It localises to the centrosome. The protein resides in the chromosome. It is found in the centromere. The protein localises to the kinetochore. Its subcellular location is the spindle. It localises to the cleavage furrow. The protein resides in the midbody. In terms of biological role, part of the dynactin complex that activates the molecular motor dynein for ultra-processive transport along microtubules. Together with dynein is involved in spindle assembly and cytokinesis. This is Dynactin subunit 3 from Sus scrofa (Pig).